A 247-amino-acid polypeptide reads, in one-letter code: Cell division protein ZapD (247 aa).

This sequence belongs to the ZapD family. Interacts with FtsZ.

It is found in the cytoplasm. Its function is as follows. Cell division factor that enhances FtsZ-ring assembly. Directly interacts with FtsZ and promotes bundling of FtsZ protofilaments, with a reduction in FtsZ GTPase activity. The sequence is that of Cell division protein ZapD from Salmonella choleraesuis (strain SC-B67).